The primary structure comprises 161 residues: Glycine/sarcosine/betaine reductase complex component A2 (161 aa).

Sec-42 is a catalytic residue. A non-standard amino acid (selenocysteine) is located at residue Sec-42.

It belongs to the GrdA family. As to quaternary structure, monomer. Component of the glycine, sarcosine and betaine reductase complexes, together with components B and C.

The enzyme catalyses acetyl phosphate + [thioredoxin]-disulfide + NH4(+) + H2O = [thioredoxin]-dithiol + glycine + phosphate + H(+). It carries out the reaction acetyl phosphate + methylamine + [thioredoxin]-disulfide + H2O = sarcosine + [thioredoxin]-dithiol + phosphate + H(+). The catalysed reaction is acetyl phosphate + trimethylamine + [thioredoxin]-disulfide + H2O = glycine betaine + [thioredoxin]-dithiol + phosphate + H(+). Functionally, in the first step of glycine, betaine and sarcosine reductases, the substrate is bound to component PB via a Schiff base intermediate. Then the PB-activated substrate is nucleophilically attacked by the selenol anion of component PA to transform it to a carboxymethylated selenoether and the respective amine. By action of component PC, acetyl phosphate is formed, leaving component PA in its oxidized state. Finally component PA becomes reduced by the thioredoxin system to start a new catalytic cycle of reductive deamination. The chain is Glycine/sarcosine/betaine reductase complex component A2 (grdA2) from Photobacterium profundum (strain SS9).